Here is a 404-residue protein sequence, read N- to C-terminus: Putative arginine deiminase (404 aa).

The active-site Amidino-cysteine intermediate is the cysteine 394.

The protein belongs to the arginine deiminase family.

It is found in the cytoplasm. It carries out the reaction L-arginine + H2O = L-citrulline + NH4(+). Its pathway is amino-acid degradation; L-arginine degradation via ADI pathway; carbamoyl phosphate from L-arginine: step 1/2. The protein is Putative arginine deiminase (arcA) of Mycoplasma pneumoniae (strain ATCC 29342 / M129 / Subtype 1) (Mycoplasmoides pneumoniae).